Consider the following 289-residue polypeptide: Acetyl-coenzyme A carboxylase carboxyl transferase subunit beta (289 aa).

A CoA carboxyltransferase N-terminal domain is found at 23–289 (HWIKCPSCSA…YDENPCLLHL (267 aa)). Zn(2+) contacts are provided by Cys27, Cys30, Cys46, and Cys49. Residues 27–49 (CPSCSALMYYKEVIAQHHVCPKC) form a C4-type zinc finger.

This sequence belongs to the AccD/PCCB family. As to quaternary structure, acetyl-CoA carboxylase is a heterohexamer composed of biotin carboxyl carrier protein (AccB), biotin carboxylase (AccC) and two subunits each of ACCase subunit alpha (AccA) and ACCase subunit beta (AccD). Zn(2+) is required as a cofactor.

The protein localises to the cytoplasm. It catalyses the reaction N(6)-carboxybiotinyl-L-lysyl-[protein] + acetyl-CoA = N(6)-biotinyl-L-lysyl-[protein] + malonyl-CoA. It participates in lipid metabolism; malonyl-CoA biosynthesis; malonyl-CoA from acetyl-CoA: step 1/1. Component of the acetyl coenzyme A carboxylase (ACC) complex. Biotin carboxylase (BC) catalyzes the carboxylation of biotin on its carrier protein (BCCP) and then the CO(2) group is transferred by the transcarboxylase to acetyl-CoA to form malonyl-CoA. This is Acetyl-coenzyme A carboxylase carboxyl transferase subunit beta from Wolinella succinogenes (strain ATCC 29543 / DSM 1740 / CCUG 13145 / JCM 31913 / LMG 7466 / NCTC 11488 / FDC 602W) (Vibrio succinogenes).